Consider the following 821-residue polypeptide: MASSEAEWVTIANNLLFKCHIHLRIHKLQDCDANVFIALYQSILGEKVPDLIVIPRSQEDNAHNVQAVIDSLALDYLQVSLSHITGENIVKGDKGSIKNLLEIFDGLLEYLTEHISESSHNRSASEQFCRDSRGEEPVEELESAKESSWRKVPFMRCSFSPDALGPTWDEEEAESTGEIIRLGDTAHTFSLRSNGAQNSMNFWSRKASTSGIRPPEEMLNPGLSSFLFKNGPTCEEEEAPPIHMATSARKLGEPIRAAIPLHPPYHPPEPRAPCPIGKEYLCSGHYLSTPASGEHRAPSVEPGDVFLTSTLCKDDDQETDLDLTESSKTRRLSKGERSENRAVAPSEYPPFPQKARKRLTEQELHAMSEKLSQRLSELDWMLKTALGDRATGEAHGKDGGAGDEEAHSANEEMLSQHSDSVMEYGPRKPRPGFSMHRKAPYRSHSLSPSSVNKHRQSEKERKKQHKSKGTDTHHFQAKALTEAFERELRKNKVQENVGLRGIREEEEETEKSYKEAFAKGTTKQSQVQKIYSRKTAAPTPKGGLLKSSKASPMKVNEHSLLSLMLEQFPFLYVSDPTLTKMWKQQMAQVEQLRREAQRENRSKKKLQDEIEEALRRHDLLTALVKKEYDHNKRLQDFKDRIHKQRLTQSKIKENRHQSVRARKYYDDYRVQLRAKMMKMRTREEMIFKKLFEEGLQIQKQRLRDLRNYAKEKRSEEKRQHQNELDSMENYYKDQFSLLAEAISQGRQELKARQRSQAQTLHKVKRELRAKMEKEIEQLQHLITQSDDDAFFRELEAERFKARLQLASFQYSKNPFPRGQTP.

Disordered stretches follow at residues 310 to 354, 390 to 474, and 514 to 550; these read TLCK…FPQK, ATGE…DTHH, and KEAF…SSKA. 2 stretches are compositionally biased toward basic and acidic residues: residues 325–340 and 390–410; these read ESSK…RSEN and ATGE…HSAN. Basic residues predominate over residues 427–441; it reads RKPRPGFSMHRKAPY. Phosphoserine occurs at positions 445, 447, and 449. Coiled coils occupy residues 578-627 and 695-789; these read LTKM…VKKE and LQIQ…DDDA.

It is found in the cytoplasm. It localises to the cytoskeleton. The protein resides in the microtubule organizing center. Its subcellular location is the centrosome. The protein localises to the spindle pole. This Rattus norvegicus (Rat) protein is Centrosomal protein of 95 kDa (Cep95).